The primary structure comprises 215 residues: Urease accessory protein UreF (215 aa).

This sequence belongs to the UreF family. In terms of assembly, ureD, UreF and UreG form a complex that acts as a GTP-hydrolysis-dependent molecular chaperone, activating the urease apoprotein by helping to assemble the nickel containing metallocenter of UreC. The UreE protein probably delivers the nickel.

It localises to the cytoplasm. Functionally, required for maturation of urease via the functional incorporation of the urease nickel metallocenter. The sequence is that of Urease accessory protein UreF from Paracoccus denitrificans (strain Pd 1222).